The sequence spans 689 residues: Glycine--tRNA ligase beta subunit (689 aa).

The protein belongs to the class-II aminoacyl-tRNA synthetase family. Tetramer of two alpha and two beta subunits.

The protein resides in the cytoplasm. It catalyses the reaction tRNA(Gly) + glycine + ATP = glycyl-tRNA(Gly) + AMP + diphosphate. This is Glycine--tRNA ligase beta subunit from Shewanella pealeana (strain ATCC 700345 / ANG-SQ1).